A 110-amino-acid chain; its full sequence is Guanine nucleotide-binding protein subunit gamma (110 aa).

Residue Cys-106 is the site of S-palmitoyl cysteine attachment. At Cys-107 the chain carries Cysteine methyl ester. The S-farnesyl cysteine moiety is linked to residue Cys-107. Residues 108-110 (TLM) constitute a propeptide, removed in mature form.

This sequence belongs to the G protein gamma family. As to quaternary structure, g proteins are composed of 3 units, alpha, beta and gamma. The beta-gamma subunit complex (STE4-STE18 complex) interacts with PLP1 and PLP2.

It is found in the membrane. Functionally, implicated in the pheromone A- and alpha-factor response pathway. The beta and gamma chains of the putative yeast mating response pathway G protein play a positive role in initiation of the mating response. The sequence is that of Guanine nucleotide-binding protein subunit gamma (STE18) from Saccharomyces cerevisiae (strain ATCC 204508 / S288c) (Baker's yeast).